A 116-amino-acid chain; its full sequence is Ribosome-binding factor A (116 aa).

This sequence belongs to the RbfA family. In terms of assembly, monomer. Binds 30S ribosomal subunits, but not 50S ribosomal subunits or 70S ribosomes.

Its subcellular location is the cytoplasm. Functionally, one of several proteins that assist in the late maturation steps of the functional core of the 30S ribosomal subunit. Associates with free 30S ribosomal subunits (but not with 30S subunits that are part of 70S ribosomes or polysomes). Required for efficient processing of 16S rRNA. May interact with the 5'-terminal helix region of 16S rRNA. This chain is Ribosome-binding factor A, found in Streptococcus pyogenes serotype M5 (strain Manfredo).